A 165-amino-acid polypeptide reads, in one-letter code: Protoporphyrinogen IX oxidase (165 aa).

4 consecutive transmembrane segments (helical) span residues 26–46 (LHVI…RLFV), 77–97 (AMIA…IVDW), 99–119 (MLWP…HMWL), and 145–165 (PTLL…YWGF). Heme is bound at residue His27. Residue Lys105 participates in heme binding.

The protein belongs to the HemJ family. As to quaternary structure, homodimer. It depends on heme b as a cofactor.

It localises to the cell membrane. The enzyme catalyses protoporphyrinogen IX + 3 A = protoporphyrin IX + 3 AH2. It functions in the pathway porphyrin-containing compound metabolism; protoporphyrin-IX biosynthesis; protoporphyrin-IX from protoporphyrinogen-IX: step 1/1. In terms of biological role, catalyzes the oxidation of protoporphyrinogen IX to protoporphyrin IX. Is involved in the biosynthesis of tetrapyrrole molecules like heme and chlorophyll. Does not use oxygen or artificial electron acceptors such as menadione or benzoquinone. This chain is Protoporphyrinogen IX oxidase, found in Cereibacter sphaeroides (strain ATCC 17023 / DSM 158 / JCM 6121 / CCUG 31486 / LMG 2827 / NBRC 12203 / NCIMB 8253 / ATH 2.4.1.) (Rhodobacter sphaeroides).